The chain runs to 376 residues: UDP-N-acetylglucosamine 2-epimerase (376 aa).

Substrate is bound by residues Arg10, Lys15, Asp95, Glu117, His213, Gln271, Phe276, Ser290–Gly292, Glu296, and Arg313.

The protein belongs to the UDP-N-acetylglucosamine 2-epimerase family. Homodimer.

It is found in the cytoplasm. The catalysed reaction is UDP-N-acetyl-alpha-D-glucosamine = UDP-N-acetyl-alpha-D-mannosamine. Its pathway is bacterial outer membrane biogenesis; enterobacterial common antigen biosynthesis. Its function is as follows. Catalyzes the reversible epimerization at C-2 of UDP-N-acetylglucosamine (UDP-GlcNAc) and thereby provides bacteria with UDP-N-acetylmannosamine (UDP-ManNAc), the activated donor of ManNAc residues. In Yersinia pestis, this protein is UDP-N-acetylglucosamine 2-epimerase.